Consider the following 61-residue polypeptide: Large ribosomal subunit protein uL30 (61 aa).

The protein belongs to the universal ribosomal protein uL30 family. In terms of assembly, part of the 50S ribosomal subunit.

The polypeptide is Large ribosomal subunit protein uL30 (Laribacter hongkongensis (strain HLHK9)).